The following is a 193-amino-acid chain: MSISVMANSHLNQPYASASPTPQEKGRTCRYAGQAVRALPIRVITVGKKRSEGVRLLVDEYKIKLKPYCSFEDSLVRSNPRNAQDVRAQVEDEEVAMMKLIGSDDWVVVLDERGRDIDSEQMAELLGDAGNSGASRISFCIGGAYGHGTQVRKRANVTIRLSSMVLNHQIALVVLMEQLYRSWTILKGQNYHH.

Residues Leu-110, Gly-142, and 161–166 (LSSMVL) contribute to the S-adenosyl-L-methionine site.

This sequence belongs to the RNA methyltransferase RlmH family.

The protein is Putative RNA methyltransferase At5g10620 of Arabidopsis thaliana (Mouse-ear cress).